Consider the following 482-residue polypeptide: tRNA sulfurtransferase (482 aa).

Positions 61 to 165 constitute a THUMP domain; it reads PAIRDALTRI…NDRLLLVKGR (105 aa). Residues 183-184, lysine 265, glycine 287, and glutamine 296 contribute to the ATP site; that span reads LI. Residues cysteine 344 and cysteine 456 are joined by a disulfide bond. A Rhodanese domain is found at 404 to 482; that stretch reads FGANDAILDI…GFSNVKVYRP (79 aa). The active-site Cysteine persulfide intermediate is the cysteine 456.

It belongs to the ThiI family.

Its subcellular location is the cytoplasm. The enzyme catalyses [ThiI sulfur-carrier protein]-S-sulfanyl-L-cysteine + a uridine in tRNA + 2 reduced [2Fe-2S]-[ferredoxin] + ATP + H(+) = [ThiI sulfur-carrier protein]-L-cysteine + a 4-thiouridine in tRNA + 2 oxidized [2Fe-2S]-[ferredoxin] + AMP + diphosphate. It carries out the reaction [ThiS sulfur-carrier protein]-C-terminal Gly-Gly-AMP + S-sulfanyl-L-cysteinyl-[cysteine desulfurase] + AH2 = [ThiS sulfur-carrier protein]-C-terminal-Gly-aminoethanethioate + L-cysteinyl-[cysteine desulfurase] + A + AMP + 2 H(+). Its pathway is cofactor biosynthesis; thiamine diphosphate biosynthesis. Functionally, catalyzes the ATP-dependent transfer of a sulfur to tRNA to produce 4-thiouridine in position 8 of tRNAs, which functions as a near-UV photosensor. Also catalyzes the transfer of sulfur to the sulfur carrier protein ThiS, forming ThiS-thiocarboxylate. This is a step in the synthesis of thiazole, in the thiamine biosynthesis pathway. The sulfur is donated as persulfide by IscS. In Klebsiella pneumoniae (strain 342), this protein is tRNA sulfurtransferase.